A 566-amino-acid polypeptide reads, in one-letter code: ATP-binding protein SyrD (566 aa).

The region spanning 22 to 301 is the ABC transmembrane type-1 domain; that stretch reads HPWLTFFTLL…LVSAMPMLAQ (280 aa). Helical transmembrane passes span 24-44, 61-81, 132-152, 158-178, 250-270, and 279-299; these read WLTFFTLLTGLISGVASIAVV, LFWFVGLSVVALLFRNGASLF, LLIMPTILVESAVFLFGIAYL, VVFAITISLMILGVAMYLLFF, QLTLSLLVGCLLFAAPMFAVI, and VLAVLYIMGPLVMLVSAMPML. In terms of domain architecture, ABC transporter spans 343-566; the sequence is IQLKNVHMNY…VKCAVEGKRA (224 aa). 380–387 lines the ATP pocket; the sequence is GGNGCGKS.

This sequence belongs to the ABC transporter superfamily. Dimer.

The protein localises to the cell inner membrane. Functionally, ATP-driven efflux pump necessary for the secretion of syringomycin. May specifically bind syringomycin and translocate it to the periplasmic space. SyrD is also required for full expression of the syrB gene. In Pseudomonas syringae pv. syringae, this protein is ATP-binding protein SyrD (syrD).